The chain runs to 377 residues: Nitric oxide reductase FlRd-NAD(+) reductase (377 aa).

This sequence belongs to the FAD-dependent oxidoreductase family. Requires FAD as cofactor.

The protein localises to the cytoplasm. It catalyses the reaction 2 reduced [nitric oxide reductase rubredoxin domain] + NAD(+) + H(+) = 2 oxidized [nitric oxide reductase rubredoxin domain] + NADH. The protein operates within nitrogen metabolism; nitric oxide reduction. One of at least two accessory proteins for anaerobic nitric oxide (NO) reductase. Reduces the rubredoxin moiety of NO reductase. The protein is Nitric oxide reductase FlRd-NAD(+) reductase of Escherichia coli O127:H6 (strain E2348/69 / EPEC).